The following is a 222-amino-acid chain: Endonuclease V (222 aa).

Mg(2+) is bound by residues aspartate 43 and aspartate 109.

It belongs to the endonuclease V family. Mg(2+) is required as a cofactor.

It localises to the cytoplasm. It carries out the reaction Endonucleolytic cleavage at apurinic or apyrimidinic sites to products with a 5'-phosphate.. Functionally, DNA repair enzyme involved in the repair of deaminated bases. Selectively cleaves double-stranded DNA at the second phosphodiester bond 3' to a deoxyinosine leaving behind the intact lesion on the nicked DNA. This is Endonuclease V from Roseiflexus sp. (strain RS-1).